The sequence spans 300 residues: Zinc finger CCCH-type antiviral protein 1-like (300 aa).

Ala-2 carries the post-translational modification N-acetylalanine. Over residues 252–263 (NTDNSSPSTEHS) the composition is skewed to polar residues. Residues 252–300 (NTDNSSPSTEHSQGLEKQGVHAAGAAEAGPLASVPAQSAKKPCPVSCEK) form a disordered region. A compositionally biased stretch (low complexity) spans 271–283 (VHAAGAAEAGPLA).

This Homo sapiens (Human) protein is Zinc finger CCCH-type antiviral protein 1-like (ZC3HAV1L).